Here is a 598-residue protein sequence, read N- to C-terminus: Elongation factor 4 (598 aa).

Residues 4–181 (SKIRNFSIIA…AVIEKIPAPK (178 aa)) form the tr-type G domain. GTP contacts are provided by residues 16-21 (DHGKST) and 128-131 (NKID).

This sequence belongs to the TRAFAC class translation factor GTPase superfamily. Classic translation factor GTPase family. LepA subfamily.

It is found in the cell membrane. It carries out the reaction GTP + H2O = GDP + phosphate + H(+). Its function is as follows. Required for accurate and efficient protein synthesis under certain stress conditions. May act as a fidelity factor of the translation reaction, by catalyzing a one-codon backward translocation of tRNAs on improperly translocated ribosomes. Back-translocation proceeds from a post-translocation (POST) complex to a pre-translocation (PRE) complex, thus giving elongation factor G a second chance to translocate the tRNAs correctly. Binds to ribosomes in a GTP-dependent manner. The sequence is that of Elongation factor 4 from Mycoplasma mobile (strain ATCC 43663 / 163K / NCTC 11711) (Mesomycoplasma mobile).